We begin with the raw amino-acid sequence, 112 residues long: CRISPR-associated endoribonuclease Cas2 2 (112 aa).

Asp-15 lines the Mg(2+) pocket.

This sequence belongs to the CRISPR-associated endoribonuclease Cas2 protein family. As to quaternary structure, homodimer, forms a heterotetramer with a Cas1 homodimer. It depends on Mg(2+) as a cofactor.

CRISPR (clustered regularly interspaced short palindromic repeat), is an adaptive immune system that provides protection against mobile genetic elements (viruses, transposable elements and conjugative plasmids). CRISPR clusters contain sequences complementary to antecedent mobile elements and target invading nucleic acids. CRISPR clusters are transcribed and processed into CRISPR RNA (crRNA). Functions as a ssRNA-specific endoribonuclease. Involved in the integration of spacer DNA into the CRISPR cassette. The protein is CRISPR-associated endoribonuclease Cas2 2 of Rhodospirillum rubrum (strain ATCC 11170 / ATH 1.1.1 / DSM 467 / LMG 4362 / NCIMB 8255 / S1).